A 430-amino-acid polypeptide reads, in one-letter code: L-lysine N6-monooxygenase MbtG (430 aa).

A signal peptide spans 1 to 21 (MTATLAVIGAGPKAVAVAAKA).

This sequence belongs to the lysine N(6)-hydroxylase/L-ornithine N(5)-oxygenase family. FAD is required as a cofactor.

It catalyses the reaction L-lysine + NADPH + O2 = N(6)-hydroxy-L-lysine + NADP(+) + H2O. It functions in the pathway siderophore biosynthesis; mycobactin biosynthesis. In terms of biological role, flavoprotein monooxygenase required for N-hydroxylation of the two acylated lysine residues during mycobactin assembly, thus producing the hydroxamate groups necessary for iron sequestration. Is also able, but less efficiently, to hydroxylate L-lysine (non acylated) in vitro. The chain is L-lysine N6-monooxygenase MbtG (mbtG) from Mycobacterium sp. (strain MCS).